The chain runs to 326 residues: Type II secretion system protein K (326 aa).

Positions 1-7 (MNHRQRG) are cleaved as a propeptide — leader sequence. The chain crosses the membrane as a helical span at residues 8–28 (IALLMVLLILALMMVLASAMT). Over 29–326 (ERSARMYQQT…RYGIYWVADE (298 aa)) the chain is Periplasmic.

It belongs to the GSP K family. In terms of assembly, type II secretion is composed of four main components: the outer membrane complex, the inner membrane complex, the cytoplasmic secretion ATPase and the periplasm-spanning pseudopilus. Interacts with core component PulG. In terms of processing, cleaved by prepilin peptidase.

The protein resides in the cell inner membrane. Component of the type II secretion system required for the energy-dependent secretion of extracellular factors such as proteases and toxins from the periplasm. Plays a role in pseudopilus assembly and seems to control its length. Interacts with the pseudopilus tip complex that is critical for the recognition and binding of secretion substrates. This Klebsiella pneumoniae protein is Type II secretion system protein K (pulK).